The sequence spans 216 residues: 3-isopropylmalate dehydratase small subunit (216 aa).

This sequence belongs to the LeuD family. LeuD type 1 subfamily. In terms of assembly, heterodimer of LeuC and LeuD.

The catalysed reaction is (2R,3S)-3-isopropylmalate = (2S)-2-isopropylmalate. It participates in amino-acid biosynthesis; L-leucine biosynthesis; L-leucine from 3-methyl-2-oxobutanoate: step 2/4. Catalyzes the isomerization between 2-isopropylmalate and 3-isopropylmalate, via the formation of 2-isopropylmaleate. The polypeptide is 3-isopropylmalate dehydratase small subunit (Methylibium petroleiphilum (strain ATCC BAA-1232 / LMG 22953 / PM1)).